Consider the following 684-residue polypeptide: Kelch repeat and BTB domain-containing protein 7 (684 aa).

Residues 1-27 form a disordered region; the sequence is MQSREDVPRSRRLASPRGGRRPKRISK. Over residues 10-26 the composition is skewed to basic residues; the sequence is SRRLASPRGGRRPKRIS. Ser-29 bears the Phosphoserine mark. Positions 63–138 constitute a BTB domain; the sequence is CDVTIEVVTP…CYTGRVSLSE (76 aa). 5 Kelch repeats span residues 386 to 435, 436 to 484, 486 to 523, 524 to 564, and 567 to 616; these read AVCV…YLNG, YIYI…VVQN, LYAV…VFND, EIYC…IVNH, and KLLL…CLCA. The segment at 630 to 666 is disordered; the sequence is ITEEDDARSESSTEWDLDGFSELDSESGSSSSFSDDE. A compositionally biased stretch (acidic residues) spans 631-654; sequence TEEDDARSESSTEWDLDGFSELDS. The ATG8 interaction motif (AIM) signature appears at 668–671; it reads WVQV.

Core component of a BCR3 (BTB-CUL3-RBX1) E3 ubiquitin ligase complex, also named Cul3-RING ubiquitin ligase complex CUL3(KBTBD6/7), composed of CUL3, RBX1, KBTBD6 and KBTBD7. Interacts with GABARAP; the interaction is direct and is required for the ubiquitination of TIAM1. Interacts with GABARAPL1, GABARAPL2 and MAP1LC3B; the interaction is direct.

It localises to the cytoplasm. It is found in the nucleus. The protein operates within protein modification; protein ubiquitination. As part of the CUL3(KBTBD6/7) E3 ubiquitin ligase complex functions as a substrate adapter for the RAC1 guanine exchange factor (GEF) TIAM1, mediating its 'Lys-48' ubiquitination and proteasomal degradation. By controlling this ubiquitination, regulates RAC1 signal transduction and downstream biological processes including the organization of the cytoskeleton, cell migration and cell proliferation. Ubiquitination of TIAM1 requires the membrane-associated protein GABARAP which may restrict locally the activity of the complex. In Homo sapiens (Human), this protein is Kelch repeat and BTB domain-containing protein 7.